A 276-amino-acid chain; its full sequence is Elongation factor Ts (276 aa).

The interval threonine 79–valine 82 is involved in Mg(2+) ion dislocation from EF-Tu.

Belongs to the EF-Ts family.

Its subcellular location is the cytoplasm. Functionally, associates with the EF-Tu.GDP complex and induces the exchange of GDP to GTP. It remains bound to the aminoacyl-tRNA.EF-Tu.GTP complex up to the GTP hydrolysis stage on the ribosome. The protein is Elongation factor Ts of Buchnera aphidicola subsp. Cinara cedri (strain Cc).